Here is a 500-residue protein sequence, read N- to C-terminus: UDP-GalNAc:beta-1,3-N-acetylgalactosaminyltransferase 2 (500 aa).

Over 1-6 (MRNWLV) the chain is Cytoplasmic. The helical; Signal-anchor for type II membrane protein transmembrane segment at 7 to 23 (LLCPCVLGAALHLWLRL) threads the bilayer. The Lumenal segment spans residues 24 to 500 (RSPPPACASG…CGDPCRCQAR (477 aa)). N-linked (GlcNAc...) asparagine glycans are attached at residues asparagine 116 and asparagine 174.

This sequence belongs to the glycosyltransferase 31 family. In terms of processing, N-glycosylated. In terms of tissue distribution, expressed in all tissues examined, but at highest levels in testis, adipose tissue, skeletal muscle and ovary.

The protein resides in the golgi apparatus membrane. The protein localises to the endoplasmic reticulum. The enzyme catalyses 3-O-(N-acetyl-beta-D-glucosaminyl-(1-&gt;4)-alpha-D-mannosyl)-L-threonyl-[protein] + UDP-N-acetyl-alpha-D-galactosamine = 3-O-[beta-D-GalNAc-(1-&gt;3)-beta-D-GlcNAc-(1-&gt;4)-alpha-D-Man]-L-Thr-[protein] + UDP + H(+). It participates in protein modification; protein glycosylation. Functionally, beta-1,3-N-acetylgalactosaminyltransferase that synthesizes a unique carbohydrate structure, GalNAc-beta-1-3GlcNAc, on N- and O-glycans. Has no galactose nor galactosaminyl transferase activity toward any acceptor substrate. Involved in alpha-dystroglycan (DAG1) glycosylation: acts coordinately with GTDC2/POMGnT2 to synthesize a GalNAc-beta3-GlcNAc-beta-terminus at the 4-position of protein O-mannose in the biosynthesis of the phosphorylated O-mannosyl trisaccharide (N-acetylgalactosamine-beta-3-N-acetylglucosamine-beta-4-(phosphate-6-)mannose), a carbohydrate structure present in alpha-dystroglycan, which is required for binding laminin G-like domain-containing extracellular proteins with high affinity. This Homo sapiens (Human) protein is UDP-GalNAc:beta-1,3-N-acetylgalactosaminyltransferase 2 (B3GALNT2).